The following is a 171-amino-acid chain: ATP synthase subunit b (171 aa).

Residues 2-22 form a helical membrane-spanning segment; the sequence is FVVKMVLGFLILLSPLCATGL.

This sequence belongs to the ATPase B chain family. In terms of assembly, F-type ATPases have 2 components, F(1) - the catalytic core - and F(0) - the membrane proton channel. F(1) has five subunits: alpha(3), beta(3), gamma(1), delta(1), epsilon(1). F(0) has three main subunits: a(1), b(2) and c(10-14). The alpha and beta chains form an alternating ring which encloses part of the gamma chain. F(1) is attached to F(0) by a central stalk formed by the gamma and epsilon chains, while a peripheral stalk is formed by the delta and b chains.

The protein resides in the cell inner membrane. In terms of biological role, f(1)F(0) ATP synthase produces ATP from ADP in the presence of a proton or sodium gradient. F-type ATPases consist of two structural domains, F(1) containing the extramembraneous catalytic core and F(0) containing the membrane proton channel, linked together by a central stalk and a peripheral stalk. During catalysis, ATP synthesis in the catalytic domain of F(1) is coupled via a rotary mechanism of the central stalk subunits to proton translocation. Component of the F(0) channel, it forms part of the peripheral stalk, linking F(1) to F(0). The protein is ATP synthase subunit b of Helicobacter pylori (strain G27).